A 1422-amino-acid polypeptide reads, in one-letter code: DNA-directed RNA polymerase subunit beta (1422 aa).

The segment at 1392-1422 (QAAREAAERDLGGGPLGAPRGAVASGEKSSA) is disordered.

Belongs to the RNA polymerase beta chain family. In terms of assembly, the RNAP catalytic core consists of 2 alpha, 1 beta, 1 beta' and 1 omega subunit. When a sigma factor is associated with the core the holoenzyme is formed, which can initiate transcription.

The catalysed reaction is RNA(n) + a ribonucleoside 5'-triphosphate = RNA(n+1) + diphosphate. In terms of biological role, DNA-dependent RNA polymerase catalyzes the transcription of DNA into RNA using the four ribonucleoside triphosphates as substrates. In Anaeromyxobacter dehalogenans (strain 2CP-C), this protein is DNA-directed RNA polymerase subunit beta.